The following is a 373-amino-acid chain: Type II secretion system protein L (373 aa).

Residues 1 to 214 lie on the Cytoplasmic side of the membrane; the sequence is MTAWRDTLGR…RRSDPMQRWN (214 aa). A helical transmembrane segment spans residues 215-233; sequence LLLAVAALVLLAVAGWLLL. Residues 234 to 373 lie on the Periplasmic side of the membrane; the sequence is DNRRQAADDL…AKEAADAAQR (140 aa).

Belongs to the GSP L family. In terms of assembly, type II secretion system is composed of four main components: the outer membrane complex, the inner membrane complex, the cytoplasmic secretion ATPase and the periplasm-spanning pseudopilus. Forms homodimers. Interacts with XpsM/GspM. Interacts with XpsE/GspE and XpsF/GspF.

The protein resides in the cell inner membrane. In terms of biological role, inner membrane component of the type II secretion system required for the energy-dependent secretion of extracellular factors such as proteases and toxins from the periplasm. Plays a role in the complex assembly and recruits XpsM resulting in a stable complex in the inner membrane. Provides thus a link between the energy-providing XpsE protein in the cytoplasm and the rest of the T2SS machinery. The protein is Type II secretion system protein L (pefL) of Xanthomonas campestris pv. campestris (strain ATCC 33913 / DSM 3586 / NCPPB 528 / LMG 568 / P 25).